The sequence spans 101 residues: Apolipoprotein C-II (101 aa).

The first 22 residues, 1–22 (MGIRYLLVLVLVLLVLGCEVQG), serve as a signal peptide directing secretion. The tract at residues 66 to 74 (TMDEKIREI) is lipid binding. The interval 78–101 (STAAVSTYAGIFTDQLLSMLKGDQ) is lipoprotein lipase cofactor.

The protein belongs to the apolipoprotein C2 family. Proapolipoprotein C-II is synthesized as a sialic acid containing glycoprotein which is subsequently desialylated prior to its proteolytic processing. Post-translationally, proapolipoprotein C-II, the major form found in plasma undergoes proteolytic cleavage of its N-terminal hexapeptide to generate apolipoprotein C-II, which occurs as the minor form in plasma.

Its subcellular location is the secreted. Functionally, component of chylomicrons, very low-density lipoproteins (VLDL), low-density lipoproteins (LDL), and high-density lipoproteins (HDL) in plasma. Plays an important role in lipoprotein metabolism as an activator of lipoprotein lipase. Both proapolipoprotein C-II and apolipoprotein C-II can activate lipoprotein lipase. This Leptonychotes weddellii (Weddell seal) protein is Apolipoprotein C-II (APOC2).